We begin with the raw amino-acid sequence, 279 residues long: uncharacterized protein (279 aa).

The 89-residue stretch at 2-90 folds into the GIY-YIG domain; the sequence is KIGYIYAIEN…IRDYGSLNTI (89 aa).

The protein belongs to the IIV-6 019R family.

This is an uncharacterized protein from Acheta domesticus (House cricket).